A 607-amino-acid polypeptide reads, in one-letter code: Acyl-coenzyme A thioesterase 11 (607 aa).

Residues 1–13 (MIQNVGNHLRRGL) constitute a mitochondrion transit peptide. A phosphoserine mark is found at Ser-15 and Ser-25. One can recognise a HotDog ACOT-type 1 domain in the interval 43-155 (NPTEVQMSQL…LATFVARREI (113 aa)). Residues 91 to 93 (TAS), 120 to 122 (NSS), Arg-181, and 271 to 273 (HFR) contribute to the CoA site. Residues 216–329 (EKTRVESVEL…FMTFVVLDAD (114 aa)) enclose the HotDog ACOT-type 2 domain. Residues 375-585 (LSVPWDPSNQ…GWNGKLAGGH (211 aa)) form the START domain.

Isoform 1 is predominantly expressed in skeletal muscle, liver, testis, stomach, spleen, lung and brain. Isoform 2 is predominantly expressed in kidney, uterus, hibernoma and white adipose tissue.

The protein localises to the mitochondrion matrix. Its subcellular location is the cytoplasm. The catalysed reaction is hexadecanoyl-CoA + H2O = hexadecanoate + CoA + H(+). It carries out the reaction tetradecanoyl-CoA + H2O = tetradecanoate + CoA + H(+). It catalyses the reaction dodecanoyl-CoA + H2O = dodecanoate + CoA + H(+). The enzyme catalyses butanoyl-CoA + H2O = butanoate + CoA + H(+). It functions in the pathway lipid metabolism; fatty acid metabolism. Functionally, has an acyl-CoA thioesterase activity with a preference for the long chain fatty acyl-CoA thioesters hexadecanoyl-CoA/palmitoyl-CoA and tetradecanoyl-CoA/myristoyl-CoA which are the main substrates in the mitochondrial beta-oxidation pathway. This chain is Acyl-coenzyme A thioesterase 11 (ACOT11), found in Homo sapiens (Human).